The following is a 232-amino-acid chain: ATP-dependent Clp protease proteolytic subunit 2 (232 aa).

S124 serves as the catalytic Nucleophile. H149 is a catalytic residue.

The protein belongs to the peptidase S14 family. Fourteen ClpP subunits assemble into 2 heptameric rings which stack back to back to give a disk-like structure with a central cavity, resembling the structure of eukaryotic proteasomes.

Its subcellular location is the cytoplasm. The enzyme catalyses Hydrolysis of proteins to small peptides in the presence of ATP and magnesium. alpha-casein is the usual test substrate. In the absence of ATP, only oligopeptides shorter than five residues are hydrolyzed (such as succinyl-Leu-Tyr-|-NHMec, and Leu-Tyr-Leu-|-Tyr-Trp, in which cleavage of the -Tyr-|-Leu- and -Tyr-|-Trp bonds also occurs).. Its function is as follows. Cleaves peptides in various proteins in a process that requires ATP hydrolysis. Has a chymotrypsin-like activity. Plays a major role in the degradation of misfolded proteins. The protein is ATP-dependent Clp protease proteolytic subunit 2 of Nostoc sp. (strain PCC 7120 / SAG 25.82 / UTEX 2576).